Reading from the N-terminus, the 347-residue chain is Phosphoribosylformylglycinamidine cyclo-ligase (347 aa).

This sequence belongs to the AIR synthase family.

Its subcellular location is the cytoplasm. The enzyme catalyses 2-formamido-N(1)-(5-O-phospho-beta-D-ribosyl)acetamidine + ATP = 5-amino-1-(5-phospho-beta-D-ribosyl)imidazole + ADP + phosphate + H(+). It functions in the pathway purine metabolism; IMP biosynthesis via de novo pathway; 5-amino-1-(5-phospho-D-ribosyl)imidazole from N(2)-formyl-N(1)-(5-phospho-D-ribosyl)glycinamide: step 2/2. This chain is Phosphoribosylformylglycinamidine cyclo-ligase, found in Prochlorococcus marinus (strain MIT 9215).